A 1098-amino-acid chain; its full sequence is Ubiquitin carboxyl-terminal hydrolase 36 (1098 aa).

Residues 72-86 (RHRSGDELQARKPGT) are compositionally biased toward basic and acidic residues. A disordered region spans residues 72-97 (RHRSGDELQARKPGTERVSGSGGDGV). One can recognise a USP domain in the interval 122-423 (AGLHNLGNTC…QAYVLFYLRI (302 aa)). The Nucleophile role is filled by cysteine 131. The Proton acceptor role is filled by histidine 382. Disordered stretches follow at residues 428–464 (KSPEGPVSRVGATLPSRPKVVPEHSKKSPGNGVVPSP) and 483–574 (EVGV…RDTI). Residues serine 429, serine 463, serine 547, and serine 578 each carry the phosphoserine modification. A compositionally biased stretch (low complexity) spans 540–558 (PLQSLTTSPTTSQGSPGTG). Residues 589–640 (GHRLKGEGSGVDLEKGDSSSSSPEHSASSDPAKAPQTAESRAAHACDSQGTN) are disordered. Positions 606–617 (SSSSSPEHSASS) are enriched in low complexity. Phosphoserine is present on serine 663. 2 disordered regions span residues 664 to 710 (PALS…SPSA) and 722 to 973 (HPVV…ALSV). The segment covering 665 to 677 (ALSSTTTEPTSLM) has biased composition (polar residues). Residue serine 678 is modified to Phosphoserine. Residues 683-692 (KKLALSAKKA) show a composition bias toward low complexity. Serine 709 is modified (phosphoserine). A compositionally biased stretch (low complexity) spans 746–763 (HPHSASLSSSSAKPLGTS). A compositionally biased stretch (polar residues) spans 853-878 (GQFQDQSWSSGSQKEEGTQPQVNGHQ). Residues 889–898 (SSRKRRKRKR) are compositionally biased toward basic residues. Residues 901–917 (GLSQEATPSQDLIQHSC) are compositionally biased toward polar residues. Over residues 921-932 (DHSEPEARTELQ) the composition is skewed to basic and acidic residues. Positions 933-943 (KKKKKKRRKRK) are enriched in basic residues. Basic and acidic residues predominate over residues 944 to 960 (PEPQQDEESKHPGDQRS).

It belongs to the peptidase C19 family. As to quaternary structure, interacts with isoform 3 of FBXW7; the interaction inhibits MYC degradation induced by SCF(FBW7) complex. Interacts with NTRK1; USP36 does not deubiquitinate NTRK1. Interacts with NEDD4L (via domains WW1, 3 and 4); the interaction inhibits ubiquitination of, at least, NTRK1, KCNQ2 and KCNQ3 by NEDD4L. Interacts (via C-terminus) with EXOSC10 (via C-terminus); the interaction is facilitated by the association with RNA and promotes sumoylation of EXOSC10. In terms of processing, polyubiquitinated by NEDD4L, no effect on USP36 protein levels. Both proteins interact with and regulate each other's ubiquitination levels.

It is found in the nucleus. The protein localises to the nucleolus. The protein resides in the cytoplasm. The enzyme catalyses Thiol-dependent hydrolysis of ester, thioester, amide, peptide and isopeptide bonds formed by the C-terminal Gly of ubiquitin (a 76-residue protein attached to proteins as an intracellular targeting signal).. In terms of biological role, deubiquitinase essential for the regulation of nucleolar structure and function. Required for cell and organism viability. Plays an important role in ribosomal RNA processing and protein synthesis, which is mediated, at least in part, through deubiquitination of DHX33, NPM1 and FBL, regulating their protein stability. Functions as a transcriptional repressor by deubiquiting histone H2B at the promoters of genes critical for cellular differentiation, such as CDKN1A, thereby preventing histone H3 'Lys-4' trimethylation (H3K4). Specifically deubiquitinates MYC in the nucleolus, leading to prevent MYC degradation by the proteasome: acts by specifically interacting with isoform 3 of FBXW7 (FBW7gamma) in the nucleolus and counteracting ubiquitination of MYC by the SCF(FBW7) complex. In contrast, it does not interact with isoform 1 of FBXW7 (FBW7alpha) in the nucleoplasm. Interacts to and regulates the actions of E3 ubiquitin-protein ligase NEDD4L over substrates such as NTRK1, KCNQ2 and KCNQ3, affecting their expression an functions. Deubiquitinates SOD2, regulates SOD2 protein stability. Deubiquitinase activity is required to control selective autophagy activation by ubiquitinated proteins. Promotes CEP63 stabilization through 'Lys-48'-linked deubiquitination leading to increased stability. Acts as a SUMO ligase to promote EXOSC10 sumoylation critical for the nucleolar RNA exosome function in rRNA processing. Binds to pre-rRNAs. This chain is Ubiquitin carboxyl-terminal hydrolase 36 (Usp36), found in Mus musculus (Mouse).